Reading from the N-terminus, the 1084-residue chain is Autophagy-related protein 11 (1084 aa).

Coiled-coil stretches lie at residues 585–739 (VQNL…LTES) and 847–879 (VIRRFNDIESLAKKLRKENKNKKILLQKYTNDK). Disordered regions lie at residues 925–961 (SMIPPRVIPNRVEPASNTNNSNPSSVPEDMGSPNMNR) and 973–1007 (NIGSNNSNNNYVNTGNANGNNKPETNIDTTSSTNA). Low complexity-rich tracts occupy residues 940-949 (SNTNNSNPSS) and 973-993 (NIGSNNSNNNYVNTGNANGNN). The span at 994–1007 (KPETNIDTTSSTNA) shows a compositional bias: polar residues.

Belongs to the ATG11 family. Homodimer and potential homooligomers. Interacts with ATG1 kinase and the ATG19 and ATG34 cargo protein transporters. Interacts with ATG9, ATG17 and ATG20.

The protein resides in the preautophagosomal structure membrane. It localises to the vacuole membrane. Involved in cytoplasm to vacuole transport (Cvt), pexophagy, mitophagy and nucleophagy. Recruits mitochondria for their selective degradation via autophagy (mitophagy) during starvation, through its interaction with ATG32. Works as scaffold proteins that recruit ATG proteins to the pre-autophagosome (PAS), the site of vesicle/autophagosome formation. Required for ATG9 anterograde transport from the mitochondria to the PAS. Also recruits the ATG19-prAPE1 complex to the PAS. Required for the Cvt vesicles completion. This chain is Autophagy-related protein 11, found in Kluyveromyces marxianus (strain DMKU3-1042 / BCC 29191 / NBRC 104275) (Yeast).